Here is a 522-residue protein sequence, read N- to C-terminus: Glucose-1-phosphate adenylyltransferase large subunit 1, chloroplastic (522 aa).

The N-terminal 54 residues, 1–54, are a transit peptide targeting the chloroplast; the sequence is MVVSADCRISLSAPSCIRSSSTGLTRHIKLGSFCNGELMGKKLNLSQLPNIRLR. Residue Ser-428 is modified to Phosphoserine.

It belongs to the bacterial/plant glucose-1-phosphate adenylyltransferase family. In terms of assembly, heterotetramer. In terms of tissue distribution, leaves.

It is found in the plastid. Its subcellular location is the chloroplast. It carries out the reaction alpha-D-glucose 1-phosphate + ATP + H(+) = ADP-alpha-D-glucose + diphosphate. It functions in the pathway glycan biosynthesis; starch biosynthesis. Activated by 3'phosphoglycerate, inhibited by orthophosphate. Allosteric regulation. Functionally, this protein plays a role in synthesis of starch. It catalyzes the synthesis of the activated glycosyl donor, ADP-glucose from Glc-1-P and ATP. This chain is Glucose-1-phosphate adenylyltransferase large subunit 1, chloroplastic (ADG2), found in Arabidopsis thaliana (Mouse-ear cress).